The chain runs to 251 residues: uncharacterized protein (251 aa).

Disordered stretches follow at residues methionine 1 to alanine 92 and lysine 137 to histidine 251. The span at alanine 69–alanine 92 shows a compositional bias: low complexity. Polar residues predominate over residues serine 155–serine 172.

This is an uncharacterized protein from Homo sapiens (Human).